Reading from the N-terminus, the 115-residue chain is Mobilization protein MbeC (115 aa).

This sequence to E.coli MbaC and MbkC. As to quaternary structure, homodimer. Interacts with MbeA and MbeB to form the relaxosome.

Required for efficient mobilization of ColE1 plasmid and is thus essential to promote the specific transfer of the plasmid during conjugation. Probably functions by inducing DNA bending, helping the MbeA relaxase to melt the DNA around the nic site and cleave the phosphodiester bond. Binds specifically double-stranded DNA (dsDNA) containing the ColE1 oriT but does not recognize the inverted repeat (IR). This is Mobilization protein MbeC (mbeC) from Escherichia coli.